Here is a 303-residue protein sequence, read N- to C-terminus: Lipoyl synthase (303 aa).

[4Fe-4S] cluster-binding residues include C34, C39, C45, C60, C64, C67, and S273. One can recognise a Radical SAM core domain in the interval 46–262 (WSKKHATVMI…ERVARTKGFL (217 aa)).

It belongs to the radical SAM superfamily. Lipoyl synthase family. The cofactor is [4Fe-4S] cluster.

The protein localises to the cytoplasm. It catalyses the reaction [[Fe-S] cluster scaffold protein carrying a second [4Fe-4S](2+) cluster] + N(6)-octanoyl-L-lysyl-[protein] + 2 oxidized [2Fe-2S]-[ferredoxin] + 2 S-adenosyl-L-methionine + 4 H(+) = [[Fe-S] cluster scaffold protein] + N(6)-[(R)-dihydrolipoyl]-L-lysyl-[protein] + 4 Fe(3+) + 2 hydrogen sulfide + 2 5'-deoxyadenosine + 2 L-methionine + 2 reduced [2Fe-2S]-[ferredoxin]. The protein operates within protein modification; protein lipoylation via endogenous pathway; protein N(6)-(lipoyl)lysine from octanoyl-[acyl-carrier-protein]: step 2/2. Functionally, catalyzes the radical-mediated insertion of two sulfur atoms into the C-6 and C-8 positions of the octanoyl moiety bound to the lipoyl domains of lipoate-dependent enzymes, thereby converting the octanoylated domains into lipoylated derivatives. In Rickettsia bellii (strain OSU 85-389), this protein is Lipoyl synthase.